Consider the following 98-residue polypeptide: Small ribosomal subunit protein uS19 (98 aa).

The interval 77 to 98 (TRTYRGHAGGKAEKGGSAPKRK) is disordered.

This sequence belongs to the universal ribosomal protein uS19 family.

Its function is as follows. Protein S19 forms a complex with S13 that binds strongly to the 16S ribosomal RNA. The sequence is that of Small ribosomal subunit protein uS19 from Prosthecochloris aestuarii (strain DSM 271 / SK 413).